The sequence spans 20 residues: Cytochrome c oxidase subunit 7B-heart, mitochondrial (20 aa).

The protein belongs to the cytochrome c oxidase VIIb family. Component of the cytochrome c oxidase (complex IV, CIV), a multisubunit enzyme composed of 14 subunits. The complex is composed of a catalytic core of 3 subunits MT-CO1, MT-CO2 and MT-CO3, encoded in the mitochondrial DNA, and 11 supernumerary subunits COX4I, COX5A, COX5B, COX6A, COX6B, COX6C, COX7A, COX7B, COX7C, COX8 and NDUFA4, which are encoded in the nuclear genome. The complex exists as a monomer or a dimer and forms supercomplexes (SCs) in the inner mitochondrial membrane with NADH-ubiquinone oxidoreductase (complex I, CI) and ubiquinol-cytochrome c oxidoreductase (cytochrome b-c1 complex, complex III, CIII), resulting in different assemblies (supercomplex SCI(1)III(2)IV(1) and megacomplex MCI(2)III(2)IV(2)).

It localises to the mitochondrion inner membrane. It catalyses the reaction 4 Fe(II)-[cytochrome c] + O2 + 8 H(+)(in) = 4 Fe(III)-[cytochrome c] + 2 H2O + 4 H(+)(out). The protein operates within energy metabolism; oxidative phosphorylation. In terms of biological role, component of the cytochrome c oxidase, the last enzyme in the mitochondrial electron transport chain which drives oxidative phosphorylation. The respiratory chain contains 3 multisubunit complexes succinate dehydrogenase (complex II, CII), ubiquinol-cytochrome c oxidoreductase (cytochrome b-c1 complex, complex III, CIII) and cytochrome c oxidase (complex IV, CIV), that cooperate to transfer electrons derived from NADH and succinate to molecular oxygen, creating an electrochemical gradient over the inner membrane that drives transmembrane transport and the ATP synthase. Cytochrome c oxidase is the component of the respiratory chain that catalyzes the reduction of oxygen to water. Electrons originating from reduced cytochrome c in the intermembrane space (IMS) are transferred via the dinuclear copper A center (CU(A)) of subunit 2 and heme A of subunit 1 to the active site in subunit 1, a binuclear center (BNC) formed by heme A3 and copper B (CU(B)). The BNC reduces molecular oxygen to 2 water molecules using 4 electrons from cytochrome c in the IMS and 4 protons from the mitochondrial matrix. The sequence is that of Cytochrome c oxidase subunit 7B-heart, mitochondrial from Thunnus obesus (Bigeye tuna).